The following is a 161-amino-acid chain: 2-C-methyl-D-erythritol 2,4-cyclodiphosphate synthase (161 aa).

A divalent metal cation is bound by residues Asp9 and His11. Residues 9-11 (DFH) and 37-38 (HS) contribute to the 4-CDP-2-C-methyl-D-erythritol 2-phosphate site. A divalent metal cation is bound at residue His45. 4-CDP-2-C-methyl-D-erythritol 2-phosphate is bound by residues 59 to 61 (DIG), 64 to 68 (FPDTD), 135 to 138 (TTTE), and Arg145.

This sequence belongs to the IspF family. In terms of assembly, homotrimer. A divalent metal cation serves as cofactor.

The enzyme catalyses 4-CDP-2-C-methyl-D-erythritol 2-phosphate = 2-C-methyl-D-erythritol 2,4-cyclic diphosphate + CMP. Its pathway is isoprenoid biosynthesis; isopentenyl diphosphate biosynthesis via DXP pathway; isopentenyl diphosphate from 1-deoxy-D-xylulose 5-phosphate: step 4/6. Involved in the biosynthesis of isopentenyl diphosphate (IPP) and dimethylallyl diphosphate (DMAPP), two major building blocks of isoprenoid compounds. Catalyzes the conversion of 4-diphosphocytidyl-2-C-methyl-D-erythritol 2-phosphate (CDP-ME2P) to 2-C-methyl-D-erythritol 2,4-cyclodiphosphate (ME-CPP) with a corresponding release of cytidine 5-monophosphate (CMP). The chain is 2-C-methyl-D-erythritol 2,4-cyclodiphosphate synthase from Leptospira interrogans serogroup Icterohaemorrhagiae serovar Lai (strain 56601).